The chain runs to 363 residues: NADH-quinone oxidoreductase subunit H (363 aa).

A run of 10 helical transmembrane segments spans residues 29 to 49, 62 to 82, 96 to 116, 127 to 147, 163 to 183, 202 to 222, 238 to 257, 264 to 286, 299 to 319, and 339 to 359; these read VLKI…YVVW, GPMY…KLLF, FIIA…VVPF, VGLL…ILAG, AAQV…VMIA, FFDW…VSGV, EIVA…LFFL, ILVS…QGWV, KGGW…YIWF, and FIPL…YGVI.

This sequence belongs to the complex I subunit 1 family. In terms of assembly, NDH-1 is composed of 14 different subunits. Subunits NuoA, H, J, K, L, M, N constitute the membrane sector of the complex.

The protein resides in the cell inner membrane. The enzyme catalyses a quinone + NADH + 5 H(+)(in) = a quinol + NAD(+) + 4 H(+)(out). Its function is as follows. NDH-1 shuttles electrons from NADH, via FMN and iron-sulfur (Fe-S) centers, to quinones in the respiratory chain. The immediate electron acceptor for the enzyme in this species is believed to be ubiquinone. Couples the redox reaction to proton translocation (for every two electrons transferred, four hydrogen ions are translocated across the cytoplasmic membrane), and thus conserves the redox energy in a proton gradient. This subunit may bind ubiquinone. This chain is NADH-quinone oxidoreductase subunit H, found in Xanthomonas oryzae pv. oryzae (strain PXO99A).